We begin with the raw amino-acid sequence, 953 residues long: uncharacterized protein (953 aa).

Helical transmembrane passes span 23-43, 103-123, 148-168, 392-412, 435-455, 481-501, 540-560, 575-595, 599-619, 642-662, and 666-686; these read VVTS…AFLI, YLFI…PILL, GRYF…LYII, VSAI…VGMI, LLGL…MSFL, AYFA…SAAT, ISSG…LGAF, LSSM…VITF, IISP…YIAY, LFQT…LFAV, and WGPI…HLHL. Residues 910 to 953 form a disordered region; it reads VPPPYNDVKDEANGEANGEFDTASKENNPFADPKYKEEESRSAV. The segment covering 942–953 has biased composition (basic and acidic residues); that stretch reads PKYKEEESRSAV. Phosphoserine is present on serine 949.

This sequence belongs to the CSC1 (TC 1.A.17) family.

Its subcellular location is the membrane. Functionally, acts as an osmosensitive calcium-permeable cation channel. This is an uncharacterized protein from Saccharomyces cerevisiae (strain ATCC 204508 / S288c) (Baker's yeast).